A 676-amino-acid polypeptide reads, in one-letter code: Pescadillo homolog (676 aa).

A coiled-coil region spans residues 298–327; it reads IAAMADDEDEQEVEMAEADAEDDDEEENTE. Disordered stretches follow at residues 298–338, 413–439, 478–502, and 515–676; these read IAAM…TAPD, PLAN…STKP, VKPK…EAEA, and EVDD…AERA. A compositionally biased stretch (acidic residues) spans 302–327; sequence ADDEDEQEVEMAEADAEDDDEEENTE. A BRCT domain is found at 351–466; the sequence is EIASLFAPFT…KLLRPDLYAP (116 aa). The span at 415-427 shows a compositional bias: low complexity; it reads ANGASAAGAEDAA. Acidic residues-rich tracts occupy residues 515–524, 539–557, and 565–577; these read EVDDDEDMDA, DVAD…DAEG, and FDDE…DISE. The stretch at 568-676 forms a coiled coil; sequence ESEAESDISE…EKAKAAAERA (109 aa). Composition is skewed to basic and acidic residues over residues 579–608, 620–631, 643–659, and 666–676; these read EAAR…KKEQ, KRAEEEERDRQK, KRIE…SENL, and LEKAKAAAERA.

It belongs to the pescadillo family. Component of the NOP7 complex, composed of ERB1, NOP7 and YTM1. The complex is held together by ERB1, which interacts with NOP7 via its N-terminal domain and with YTM1 via a high-affinity interaction between the seven-bladed beta-propeller domains of the 2 proteins. The NOP7 complex associates with the 66S pre-ribosome.

Its subcellular location is the nucleus. It localises to the nucleolus. The protein resides in the nucleoplasm. Functionally, component of the NOP7 complex, which is required for maturation of the 25S and 5.8S ribosomal RNAs and formation of the 60S ribosome. The protein is Pescadillo homolog of Phaeosphaeria nodorum (strain SN15 / ATCC MYA-4574 / FGSC 10173) (Glume blotch fungus).